Reading from the N-terminus, the 147-residue chain is uncharacterized protein (147 aa).

This is an uncharacterized protein from Mycobacterium tuberculosis (strain CDC 1551 / Oshkosh).